We begin with the raw amino-acid sequence, 166 residues long: 3-hydroxyacyl-[acyl-carrier-protein] dehydratase FabZ (166 aa).

H72 is a catalytic residue.

This sequence belongs to the thioester dehydratase family. FabZ subfamily.

The protein localises to the cytoplasm. It carries out the reaction a (3R)-hydroxyacyl-[ACP] = a (2E)-enoyl-[ACP] + H2O. Involved in unsaturated fatty acids biosynthesis. Catalyzes the dehydration of short chain beta-hydroxyacyl-ACPs and long chain saturated and unsaturated beta-hydroxyacyl-ACPs. The polypeptide is 3-hydroxyacyl-[acyl-carrier-protein] dehydratase FabZ (Synechococcus sp. (strain JA-3-3Ab) (Cyanobacteria bacterium Yellowstone A-Prime)).